The following is a 656-amino-acid chain: Nuclear elongation and deformation protein 1 (656 aa).

A phosphoserine mark is found at Ser-99 and Ser-103. The span at 99 to 118 (SPIVSPTTSPKQTPSINVTE) shows a compositional bias: polar residues. Residues 99–121 (SPIVSPTTSPKQTPSINVTEPQD) form a disordered region. Phosphothreonine is present on Thr-106. Phosphoserine occurs at positions 107, 159, and 286. 2 disordered regions span residues 282-328 (VYGH…VSES) and 587-656 (SDEE…ENAV). Over residues 291–300 (PSRTPASPKS) the composition is skewed to low complexity. A phosphoserine mark is found at Ser-318, Ser-321, and Ser-587. Positions 318-328 (SEQSLSPVSES) are enriched in polar residues. Residues 596-609 (KSTSKSPKTPKNTK) are compositionally biased toward low complexity. Acidic residues predominate over residues 640–656 (FEGEEDEEGEEDVENAV).

Belongs to the lipin family. In terms of assembly, interacts with dis3, pim1 and nup189.

Its function is as follows. May have a role in the maintenance of the nuclear envelope structure and in minichromosome stability. The polypeptide is Nuclear elongation and deformation protein 1 (ned1) (Schizosaccharomyces pombe (strain 972 / ATCC 24843) (Fission yeast)).